Reading from the N-terminus, the 461-residue chain is L-serine dehydratase (461 aa).

It belongs to the iron-sulfur dependent L-serine dehydratase family. [4Fe-4S] cluster serves as cofactor.

It catalyses the reaction L-serine = pyruvate + NH4(+). It functions in the pathway carbohydrate biosynthesis; gluconeogenesis. In Mycobacterium bovis (strain ATCC BAA-935 / AF2122/97), this protein is L-serine dehydratase (sdaA).